The primary structure comprises 174 residues: uncharacterized protein (174 aa).

This is an uncharacterized protein from Rickettsia conorii (strain ATCC VR-613 / Malish 7).